The chain runs to 203 residues: Imidazoleglycerol-phosphate dehydratase (203 aa).

It belongs to the imidazoleglycerol-phosphate dehydratase family.

Its subcellular location is the cytoplasm. It catalyses the reaction D-erythro-1-(imidazol-4-yl)glycerol 3-phosphate = 3-(imidazol-4-yl)-2-oxopropyl phosphate + H2O. Its pathway is amino-acid biosynthesis; L-histidine biosynthesis; L-histidine from 5-phospho-alpha-D-ribose 1-diphosphate: step 6/9. This is Imidazoleglycerol-phosphate dehydratase from Salinispora arenicola (strain CNS-205).